The following is a 311-amino-acid chain: Probable cell division protein WhiA (311 aa).

Positions 277 to 311 (TLKEVADQIPDGPISKSGVNHRFKKLHELAETLKE) form a DNA-binding region, H-T-H motif.

This sequence belongs to the WhiA family.

Involved in cell division and chromosome segregation. This Lactobacillus helveticus (strain DPC 4571) protein is Probable cell division protein WhiA.